The primary structure comprises 402 residues: Phosphoglycerate kinase (402 aa).

Residues 24 to 26, arginine 40, 63 to 66, arginine 122, and arginine 155 each bind substrate; these read DFN and HFGR. ATP-binding positions include lysine 206, glycine 297, glutamate 328, and 357 to 360; that span reads GGDS.

This sequence belongs to the phosphoglycerate kinase family. In terms of assembly, monomer.

It localises to the cytoplasm. It catalyses the reaction (2R)-3-phosphoglycerate + ATP = (2R)-3-phospho-glyceroyl phosphate + ADP. The protein operates within carbohydrate degradation; glycolysis; pyruvate from D-glyceraldehyde 3-phosphate: step 2/5. The sequence is that of Phosphoglycerate kinase from Synechococcus elongatus (strain ATCC 33912 / PCC 7942 / FACHB-805) (Anacystis nidulans R2).